Here is a 1063-residue protein sequence, read N- to C-terminus: Lysine-specific demethylase phf2 (1063 aa).

Residues 5-56 form a PHD-type zinc finger; sequence PVYCICRLPYDVTQFMIECDACKDWFHGSCVGVDEDEAPDIDIYHCPNCEKT. The JmjC domain occupies 197-353; sequence FSDARMANIV…MQMRAYEVEK (157 aa). Thr246 is a 2-oxoglutarate binding site. Fe cation contacts are provided by His249 and Glu251. Residues Tyr259 and Lys266 each contribute to the 2-oxoglutarate site. Asn321 is a binding site for Fe cation. 4 disordered regions span residues 448–546, 704–761, 773–864, and 879–1045; these read VSDS…LAAL, NIKE…SAGI, GIDY…DMFD, and YVYP…MATA. The span at 460–477 shows a compositional bias: low complexity; sequence SEPSNSKPPAEEPPSALS. Basic and acidic residues-rich tracts occupy residues 513 to 540 and 723 to 745; these read PPKE…EKKP and KSPD…DVKG. A compositionally biased stretch (basic residues) spans 746–755; that stretch reads RNSKVSKKKG. The segment covering 776–791 has biased composition (polar residues); it reads YSNNSQPPASPSTQEA. A compositionally biased stretch (low complexity) spans 813–833; that stretch reads SNSQAKNNSHSSAASKKPSGA. The span at 842 to 852 shows a compositional bias: basic residues; sequence RPAKRLPKKTQ. Residues 920-929 show a composition bias toward basic and acidic residues; that stretch reads RQERPAREGA. The span at 953–964 shows a compositional bias: basic residues; sequence IKKKKKSAKKKP. Over residues 965–975 the composition is skewed to basic and acidic residues; the sequence is IVAEESHKLSH. 2 stretches are compositionally biased toward low complexity: residues 976–988 and 1021–1031; these read DSSS…DSES and SSSSSSQNASS. Residue Ser1021 is modified to Phosphoserine; by PKA.

The protein belongs to the JHDM1 histone demethylase family. JHDM1D subfamily.

It is found in the nucleus. The protein localises to the nucleolus. It localises to the chromosome. Its subcellular location is the centromere. The protein resides in the kinetochore. Lysine demethylase that demethylates both histones and non-histone proteins. Mediates demethylation of dimethylated 'Lys-9' of histone H3 (H3K9me2). Recruited to trimethylated 'Lys-4' of histone H3 (H3K4me3) at rDNA promoters and promotes expression of rDNA. The protein is Lysine-specific demethylase phf2 (phf2) of Danio rerio (Zebrafish).